Here is a 484-residue protein sequence, read N- to C-terminus: L-amino-acid oxidase (484 aa).

An intrachain disulfide couples Cys8 to Cys171. Residues 41–42 (MS), 61–62 (EA), and Arg69 contribute to the FAD site. A Zn(2+)-binding site is contributed by His73. Position 85–88 (85–88 (GPMR)) interacts with FAD. Residue Arg88 coordinates substrate. N-linked (GlcNAc...) asparagine glycosylation is present at Asn170. A substrate-binding site is contributed by His221. Val259 is a binding site for FAD. Glu277 serves as a coordination point for Zn(2+). Residues Cys329 and Cys410 are joined by a disulfide bond. Tyr370 is a substrate binding site. FAD is bound by residues Glu455 and 462–467 (GWIDST). 462–463 (GW) contributes to the substrate binding site.

This sequence belongs to the flavin monoamine oxidase family. FIG1 subfamily. In terms of assembly, homodimer; non-covalently linked. FAD is required as a cofactor. Expressed by the venom gland.

It localises to the secreted. It catalyses the reaction an L-alpha-amino acid + O2 + H2O = a 2-oxocarboxylate + H2O2 + NH4(+). In terms of biological role, catalyzes an oxidative deamination of predominantly hydrophobic and aromatic L-amino acids, thus producing hydrogen peroxide that may contribute to the diverse toxic effects of this enzyme. Exhibits diverse biological activities, such as hemorrhage, hemolysis, edema, apoptosis of vascular endothelial cells or tumor cell lines, antibacterial and antiparasitic activities, as well as regulation of platelet aggregation. Effects of snake L-amino oxidases on platelets are controversial, since they either induce aggregation or inhibit agonist-induced aggregation. These different effects are probably due to different experimental conditions. This Vipera ammodytes ammodytes (Western sand viper) protein is L-amino-acid oxidase.